Here is a 275-residue protein sequence, read N- to C-terminus: Large ribosomal subunit protein uL2cz/uL2cy (275 aa).

Disordered regions lie at residues 1 to 26 (MAIH…VKSN) and 224 to 275 (MNPV…RRTK). Residues 7–26 (KTSTPSTRNGTVDSRQVKSN) show a composition bias toward polar residues.

It belongs to the universal ribosomal protein uL2 family. As to quaternary structure, part of the 50S ribosomal subunit.

It is found in the plastid. Its subcellular location is the chloroplast. In Phaseolus angularis (Azuki bean), this protein is Large ribosomal subunit protein uL2cz/uL2cy (rpl2-A).